A 92-amino-acid polypeptide reads, in one-letter code: Small ribosomal subunit protein uS19 (92 aa).

This sequence belongs to the universal ribosomal protein uS19 family.

Protein S19 forms a complex with S13 that binds strongly to the 16S ribosomal RNA. This Rhodopseudomonas palustris (strain HaA2) protein is Small ribosomal subunit protein uS19.